Consider the following 362-residue polypeptide: MLYDLAHPLAEQFFLFNLFRYITFRSGAACMTALIVSFLLGPALIRWLKSVQRGGQPIREDGPERHLLEKKGTPTMGGVLILAATGISTLLWTDLRNGYVWAVLLLTLGYGGIGFADDYLKLSKRNTKGLPGRVKLIGQAVIGLIAAIWIMSLTRDPLSTGLAIPLLKDVLIPLGFAFPLFGMLVAMGASNAVNLTDGLDGLAIVPTIIAAGVFALIAYLVGNHVFATYLQLNEVAGTGELTVFCSALIGAGLGFLWFNAPPARVFMGDTGSLALGGALGGVAIATKHEIVLAIVGGLFVVETISVIVQVFWYKRTGRRVFLMAPLHHHFEKKGWPESTIVIRFWIVSFILALAGLATLKIR.

The next 10 helical transmembrane spans lie at 28–48, 72–92, 100–120, 134–154, 170–190, 201–221, 241–261, 265–285, 290–310, and 339–359; these read AACM…IRWL, GTPT…TLLW, VWAV…DDYL, VKLI…MSLT, VLIP…MGAS, GLAI…AYLV, LTVF…FNAP, VFMG…VAIA, IVLA…IVQV, and TIVI…LATL.

It belongs to the glycosyltransferase 4 family. MraY subfamily. Mg(2+) serves as cofactor.

It is found in the cell inner membrane. It catalyses the reaction UDP-N-acetyl-alpha-D-muramoyl-L-alanyl-gamma-D-glutamyl-meso-2,6-diaminopimeloyl-D-alanyl-D-alanine + di-trans,octa-cis-undecaprenyl phosphate = di-trans,octa-cis-undecaprenyl diphospho-N-acetyl-alpha-D-muramoyl-L-alanyl-D-glutamyl-meso-2,6-diaminopimeloyl-D-alanyl-D-alanine + UMP. The protein operates within cell wall biogenesis; peptidoglycan biosynthesis. Catalyzes the initial step of the lipid cycle reactions in the biosynthesis of the cell wall peptidoglycan: transfers peptidoglycan precursor phospho-MurNAc-pentapeptide from UDP-MurNAc-pentapeptide onto the lipid carrier undecaprenyl phosphate, yielding undecaprenyl-pyrophosphoryl-MurNAc-pentapeptide, known as lipid I. This Granulibacter bethesdensis (strain ATCC BAA-1260 / CGDNIH1) protein is Phospho-N-acetylmuramoyl-pentapeptide-transferase.